Consider the following 388-residue polypeptide: MPHFIASSFTHPDYPFEEEGYCFSDSLSNLLHPHEELVRVEVEGKEFFLRIKHRLKENDFIIRFDKSTRVSPVGIIKKALRIFAQKSQAQILSDNLSEEDSIRQKRLTPFLKTPEFFMHEAHQGQYWVEIGFGSGRHLLHQAKAHPEKRFIGLEIHTPSIEQVLRRLELEEISNVSIVSYDARVFLELLPSNAIERLFVHFPVPWDKKPHRRIFSRAFLNEAIRTLGVGGVLELRTDSEDYFLFAKELLLELNRVHFSIRKNFDAPISSKYEDRWRKQNKNIYDLLLHNDQHSPDPLRPSDFSFKPLKRCDAAELRREIREGWFASIERLYRSKDGKSMAIRSSFGDFAYPEKKYLWIKGEEARYFGSSPIPSLANHQAHKLLEEWLS.

Positions 129, 154, and 181 each coordinate S-adenosyl-L-methionine. Substrate is bound by residues Lys207 and Asp237.

Belongs to the class I-like SAM-binding methyltransferase superfamily. TrmB family.

It catalyses the reaction guanosine(46) in tRNA + S-adenosyl-L-methionine = N(7)-methylguanosine(46) in tRNA + S-adenosyl-L-homocysteine. Its pathway is tRNA modification; N(7)-methylguanine-tRNA biosynthesis. In terms of biological role, catalyzes the formation of N(7)-methylguanine at position 46 (m7G46) in tRNA. In Wolinella succinogenes (strain ATCC 29543 / DSM 1740 / CCUG 13145 / JCM 31913 / LMG 7466 / NCTC 11488 / FDC 602W) (Vibrio succinogenes), this protein is tRNA (guanine-N(7)-)-methyltransferase.